The primary structure comprises 549 residues: Formate--tetrahydrofolate ligase (549 aa).

An ATP-binding site is contributed by 60-67 (TPYGEGKT).

This sequence belongs to the formate--tetrahydrofolate ligase family.

It catalyses the reaction (6S)-5,6,7,8-tetrahydrofolate + formate + ATP = (6R)-10-formyltetrahydrofolate + ADP + phosphate. It participates in one-carbon metabolism; tetrahydrofolate interconversion. This chain is Formate--tetrahydrofolate ligase, found in Campylobacter concisus (strain 13826).